The chain runs to 969 residues: Proprotein convertase subtilisin/kexin type 6 (969 aa).

The segment covering 1–16 has biased composition (pro residues); it reads MPPRAPPAPGPRPPPR. A disordered region spans residues 1–39; it reads MPPRAPPAPGPRPPPRAAAATDTAAGAGGAGGAGGAGGP. The signal sequence occupies residues 1 to 63; that stretch reads MPPRAPPAPG…LLALPAACSA (63 aa). Residues 26-39 show a composition bias toward gly residues; it reads GAGGAGGAGGAGGP. Positions 64–149 are excised as a propeptide; sequence PPPRPVYTNH…QQEVKRRVKR (86 aa). Residues 168–487 form the Peptidase S8 domain; that stretch reads MWYLHCGDKN…FGLVDAEALV (320 aa). Active-site charge relay system residues include Asp-205 and His-246. Residue Asn-259 is glycosylated (N-linked (GlcNAc...) asparagine). The Charge relay system role is filled by Ser-420. One can recognise a P/Homo B domain in the interval 495–635; that stretch reads AVPSQHMCVA…SLILYGTAEH (141 aa). The Cell attachment site signature appears at 553-555; it reads RGD. A disordered region spans residues 658-683; the sequence is EPPKAALSPSQVEVPEDEEDYTAQST. FU repeat units follow at residues 692–739, 743–790, 794–838, 842–887, and 895–943; these read TSVC…GYFG, ARRC…GFYA, QKNC…GTYF, LIRC…GFYP, and HKVC…ETFC. The tract at residues 695–930 is CRM (Cys-rich motif); it reads CHPECGDKGC…GFTQLGTSCI (236 aa). Asn-914 and Asn-932 each carry an N-linked (GlcNAc...) asparagine glycan. One can recognise a PLAC domain in the interval 931 to 969; that stretch reads TNHTCSNADETFCEMVKSNRLCERKLFIQFCCRTCLLAG.

This sequence belongs to the peptidase S8 family. The PACE4A-I precursor protein seems to exist in the reticulum endoplasmic as both a monomer and a dimer-sized complex whereas mature PACE4A-I exists only as a monomer, suggesting that propeptide cleavage affects its tertiary or quaternary structure. Interacts (immature form including the propeptide) with RCN3; probably involved in the maturation and the secretion of PCSK6. Ca(2+) serves as cofactor. Each PACE4 isoform exhibits a unique restricted distribution. Isoform PACE4A-I is expressed in heart, brain, placenta, lung, skeletal muscle, kidney, pancreas, but at comparatively higher levels in the liver. Isoform PACE4A-II is at least expressed in placenta. Isoform PACE4B was only found in the embryonic kidney cell line from which it was isolated. Isoform PACE4C and isoform PACE4D are expressed in placenta. Isoform PACE4E-I is expressed in cerebellum, placenta and pituitary. Isoform PACE4E-II is at least present in cerebellum.

It is found in the secreted. The protein localises to the endoplasmic reticulum. Its subcellular location is the endomembrane system. Functionally, serine endoprotease that processes various proproteins by cleavage at paired basic amino acids, recognizing the RXXX[KR]R consensus motif. Likely functions in the constitutive secretory pathway, with unique restricted distribution in both neuroendocrine and non-neuroendocrine tissues. In Homo sapiens (Human), this protein is Proprotein convertase subtilisin/kexin type 6 (PCSK6).